The chain runs to 80 residues: U-Asilidin(1)-Dg12 (80 aa).

The first 24 residues, 1–24 (MARLLVVSVGVFLAVIMLSSETMS), serve as a signal peptide directing secretion. A propeptide spanning residues 25–46 (LPAGENLPALTLFEAQNQLIGL) is cleaved from the precursor. 3 disulfides stabilise this stretch: cysteine 53–cysteine 67, cysteine 60–cysteine 71, and cysteine 66–cysteine 78.

The protein belongs to the asilidin-1 family. Expressed by the venom gland.

The protein localises to the secreted. In terms of biological role, neurotoxin that may modulate ions channels (other than those tested). In vivo, induces neurotoxic effects when injected into insects (tested on L.cuprina and A.domesticus). This chain is U-Asilidin(1)-Dg12, found in Dolopus genitalis (Giant Australian assassin fly).